The following is a 224-amino-acid chain: Uracil-DNA glycosylase (224 aa).

Aspartate 62 acts as the Proton acceptor in catalysis.

It belongs to the uracil-DNA glycosylase (UDG) superfamily. UNG family.

It localises to the cytoplasm. It catalyses the reaction Hydrolyzes single-stranded DNA or mismatched double-stranded DNA and polynucleotides, releasing free uracil.. Excises uracil residues from the DNA which can arise as a result of misincorporation of dUMP residues by DNA polymerase or due to deamination of cytosine. This Aliivibrio salmonicida (strain LFI1238) (Vibrio salmonicida (strain LFI1238)) protein is Uracil-DNA glycosylase.